A 476-amino-acid polypeptide reads, in one-letter code: Probable coniferyl aldehyde dehydrogenase (476 aa).

Active-site residues include Glu225 and Cys259.

It belongs to the aldehyde dehydrogenase family. As to quaternary structure, homodimer.

It carries out the reaction (E)-coniferaldehyde + NADP(+) + H2O = (E)-ferulate + NADPH + 2 H(+). The enzyme catalyses (E)-coniferaldehyde + NAD(+) + H2O = (E)-ferulate + NADH + 2 H(+). The chain is Probable coniferyl aldehyde dehydrogenase (calB) from Pseudomonas aeruginosa (strain ATCC 15692 / DSM 22644 / CIP 104116 / JCM 14847 / LMG 12228 / 1C / PRS 101 / PAO1).